The chain runs to 743 residues: Protein STB5 (743 aa).

A DNA-binding region (zn(2)-C6 fungal-type) is located at residues 22–49 (CARCRKLKKKCGKQIPTCANCDKNGAHC). 2 disordered regions span residues 81–100 (VGKSPLSTKSMPNSSSPLSA) and 155–249 (NSNP…YANN). Composition is skewed to polar residues over residues 85–99 (PLSTKSMPNSSSPLS) and 155–198 (NSNP…SPLI). A compositionally biased stretch (low complexity) spans 213–238 (NNNRNTSNGDNGSNVNHDNNNGSTNT). Over residues 239 to 249 (PQLSLTPYANN) the composition is skewed to polar residues.

It is found in the nucleus. Binds to SIN3. The polypeptide is Protein STB5 (STB5) (Saccharomyces cerevisiae (strain ATCC 204508 / S288c) (Baker's yeast)).